Here is a 234-residue protein sequence, read N- to C-terminus: ATP-dependent dethiobiotin synthetase BioD (234 aa).

ATP is bound at residue 14–19; the sequence is GVGKTI. A Mg(2+)-binding site is contributed by Thr18. Lys39 is a catalytic residue. A substrate-binding site is contributed by Ser43. ATP contacts are provided by residues Asp56, 118–121, 178–179, and 208–210; these read EGAG, NH, and PWL. Mg(2+) is bound by residues Asp56 and Glu118.

This sequence belongs to the dethiobiotin synthetase family. In terms of assembly, homodimer. It depends on Mg(2+) as a cofactor.

It localises to the cytoplasm. The catalysed reaction is (7R,8S)-7,8-diammoniononanoate + CO2 + ATP = (4R,5S)-dethiobiotin + ADP + phosphate + 3 H(+). It functions in the pathway cofactor biosynthesis; biotin biosynthesis; biotin from 7,8-diaminononanoate: step 1/2. Functionally, catalyzes a mechanistically unusual reaction, the ATP-dependent insertion of CO2 between the N7 and N8 nitrogen atoms of 7,8-diaminopelargonic acid (DAPA, also called 7,8-diammoniononanoate) to form a ureido ring. This Marinobacter nauticus (strain ATCC 700491 / DSM 11845 / VT8) (Marinobacter aquaeolei) protein is ATP-dependent dethiobiotin synthetase BioD.